Reading from the N-terminus, the 324-residue chain is UDP-N-acetylenolpyruvoylglucosamine reductase (324 aa).

The 180-residue stretch at 38-217 (AGGLAELMFQ…IRAEMDAVRQ (180 aa)) folds into the FAD-binding PCMH-type domain. The active site involves R183. Catalysis depends on S232, which acts as the Proton donor. E302 is a catalytic residue.

Belongs to the MurB family. The cofactor is FAD.

The protein localises to the cytoplasm. It catalyses the reaction UDP-N-acetyl-alpha-D-muramate + NADP(+) = UDP-N-acetyl-3-O-(1-carboxyvinyl)-alpha-D-glucosamine + NADPH + H(+). The protein operates within cell wall biogenesis; peptidoglycan biosynthesis. Functionally, cell wall formation. This Allorhizobium ampelinum (strain ATCC BAA-846 / DSM 112012 / S4) (Agrobacterium vitis (strain S4)) protein is UDP-N-acetylenolpyruvoylglucosamine reductase.